Consider the following 968-residue polypeptide: RNA polymerase-associated protein RapA (968 aa).

Positions 164–334 (DVGRRHAPRV…FARLRLLDPN (171 aa)) constitute a Helicase ATP-binding domain. 177–184 (DEVGLGKT) contributes to the ATP binding site. Residues 280-283 (DEAH) carry the DEAH box motif. The region spanning 490–685 (RVEWLMGYLT…ALKAQLEQGR (196 aa)) is the Helicase C-terminal domain.

This sequence belongs to the SNF2/RAD54 helicase family. RapA subfamily. Interacts with the RNAP. Has a higher affinity for the core RNAP than for the holoenzyme. Its ATPase activity is stimulated by binding to RNAP.

In terms of biological role, transcription regulator that activates transcription by stimulating RNA polymerase (RNAP) recycling in case of stress conditions such as supercoiled DNA or high salt concentrations. Probably acts by releasing the RNAP, when it is trapped or immobilized on tightly supercoiled DNA. Does not activate transcription on linear DNA. Probably not involved in DNA repair. This is RNA polymerase-associated protein RapA from Salmonella typhi.